A 212-amino-acid polypeptide reads, in one-letter code: Large ribosomal subunit protein uL3 (212 aa).

Gln153 is modified (N5-methylglutamine).

This sequence belongs to the universal ribosomal protein uL3 family. Part of the 50S ribosomal subunit. Forms a cluster with proteins L14 and L19. Methylated by PrmB.

One of the primary rRNA binding proteins, it binds directly near the 3'-end of the 23S rRNA, where it nucleates assembly of the 50S subunit. The polypeptide is Large ribosomal subunit protein uL3 (Marinobacter nauticus (strain ATCC 700491 / DSM 11845 / VT8) (Marinobacter aquaeolei)).